Here is a 2097-residue protein sequence, read N- to C-terminus: SCAR-like protein 1 (2097 aa).

Disordered stretches follow at residues 205 to 227, 544 to 565, 1443 to 1467, 1588 to 1616, 1730 to 1802, 1820 to 1842, and 1893 to 1944; these read IANSESHTTSKDRSSRKVPPRTT, AHSSDKQSSQKSSGLDGSSIES, SQIASCSPTPSNEKIDELNAPPLSS, STEETYRLSSPVPPPNEPFSNVSYEDPQK, QERV…EKTV, ASSHVSENGCNQQSHGESLPVTS, and YEGP…EGGY. The segment covering 549–562 has biased composition (low complexity); it reads KQSSQKSSGLDGSS. The span at 1443 to 1454 shows a compositional bias: polar residues; sequence SQIASCSPTPSN. Residues 1766 to 1794 are compositionally biased toward polar residues; the sequence is SISQQGLQGSVFPSDTSDNGEHSSYTSRA. Positions 1908–1922 are enriched in basic and acidic residues; it reads YPHDDHNSEKEDIHQ. The region spanning 2028-2046 is the WH2 domain; the sequence is ERNLLLEQIRNKTFNLKPV.

Belongs to the SCAR/WAVE family.

The protein resides in the cytoplasm. Its subcellular location is the cytoskeleton. In terms of biological role, involved in regulation of actin and microtubule organization. Part of a WAVE complex that activates the Arp2/3 complex. The chain is SCAR-like protein 1 from Oryza sativa subsp. japonica (Rice).